We begin with the raw amino-acid sequence, 463 residues long: DNA-binding protein K10 (463 aa).

Residues 1 to 13 (MVSKNQFYQNWTM) are compositionally biased toward polar residues. Residues 1–304 (MVSKNQFYQN…RNGPGPGPMM (304 aa)) form a disordered region. The segment covering 14–50 (QSQQQHPHQMQQQFQQQQQPNLQHRNNQSNNNNCNNN) has biased composition (low complexity). Residues 85 to 94 (QMMFSSSQMP) are compositionally biased toward polar residues. 7 repeat units span residues 87–94 (MFSSSQMP), 95–102 (SDPLYIDF), 103–110 (SSPPPGFK), 111–118 (HNQVGSPK), 119–126 (KKSMKGIK), 127–134 (QQQHPSPN), and 135–142 (QQQPPSPN). Positions 87 to 142 (MFSSSQMPSDPLYIDFSSPPPGFKHNQVGSPKKKSMKGIKQQQHPSPNQQQPPSPN) are 7 X approximate tandem repeats. Residues 142–193 (NQQQHPSPNQQQHPSPNQQQHPNSNQQQHLSPNQQQGKMNNQNNNHMNQSQQ) are compositionally biased toward low complexity. Over residues 194–214 (PFNNQMNGSDWQRHPGNNPNQ) the composition is skewed to polar residues. Pro residues-rich tracts occupy residues 225–270 (GPPP…PPVP) and 282–291 (GGPPPPPPPL). A DNA-binding region (H-T-H motif) is located at residues 397–416 (DELFAQYKGQRDKFVSLYEA). Residues 426–463 (AATVKAKDAKSDKDKNAISSQSAAPKAGSAKDATIPNP) form a disordered region. A compositionally biased stretch (basic and acidic residues) spans 430-441 (KAKDAKSDKDKN).

In terms of assembly, interacts (via N-terminus) with sqd; the interaction is direct and may be involved in localization of sqd to the oocyte during oogenesis.

Its subcellular location is the nucleus. May be involved in localization of sqd to the oocyte during oogenesis. In Drosophila melanogaster (Fruit fly), this protein is DNA-binding protein K10 (fs(1)K10).